The chain runs to 159 residues: Stress-induced protein 1 (159 aa).

Residues 33–141 (NNFNNIVPQQ…TVRALPIHTS (109 aa)) form the sHSP domain.

It belongs to the small heat shock protein (HSP20) family.

The chain is Stress-induced protein 1 from Caenorhabditis elegans.